Consider the following 275-residue polypeptide: Intercellular adhesion molecule 2 (275 aa).

A signal peptide spans 1–24 (MSSFSYRTLTVALFALICCPGSDE). Topologically, residues 25–223 (KVFEVHVRPK…EIYEPVSDSQ (199 aa)) are extracellular. The Ig-like C2-type 1 domain occupies 41 to 98 (KGSLKVNCSTTCNQPEVGGLETSLDKILLDEQAQWKHYLVSNISHDTVLQCHFTCSGK). 6 N-linked (GlcNAc...) asparagine glycosylation sites follow: N47, N82, N105, N153, N176, and N187. 2 cysteine pairs are disulfide-bonded: C48–C91 and C52–C95. The region spanning 127–197 (GKSFTIECRV…FSCLAVLDLM (71 aa)) is the Ig-like C2-type 2 domain. A disulfide bridge links C134 with C190. Residues 224 to 248 (MVIIVTVVSVLLSLFVTSVLLCFIF) form a helical membrane-spanning segment. The Cytoplasmic segment spans residues 249–275 (GQHLRQQRMGTYGVRAAWRRLPQAFRP). The tract at residues 251–275 (HLRQQRMGTYGVRAAWRRLPQAFRP) is required for interaction with EZR, MSN and RDX and co-localization to microvilli.

Belongs to the immunoglobulin superfamily. ICAM family. Interacts with RDX, EZR and MSN.

The protein localises to the membrane. The protein resides in the cell projection. Its subcellular location is the microvillus. In terms of biological role, ICAM proteins are ligands for the leukocyte adhesion protein LFA-1 (integrin alpha-L/beta-2). ICAM2 may play a role in lymphocyte recirculation by blocking LFA-1-dependent cell adhesion. It mediates adhesive interactions important for antigen-specific immune response, NK-cell mediated clearance, lymphocyte recirculation, and other cellular interactions important for immune response and surveillance. The sequence is that of Intercellular adhesion molecule 2 (ICAM2) from Pan troglodytes (Chimpanzee).